We begin with the raw amino-acid sequence, 425 residues long: UPF0597 protein UNCMA_16400 (425 aa).

Belongs to the UPF0597 family.

The polypeptide is UPF0597 protein UNCMA_16400 (Methanocella arvoryzae (strain DSM 22066 / NBRC 105507 / MRE50)).